The following is a 730-amino-acid chain: ATP-dependent DNA helicase Hel308 (730 aa).

Residues Gln28 and 46–53 each bind ATP; that span reads IPTASGKT. Positions 33–199 constitute a Helicase ATP-binding domain; sequence EKGLLEGKNL…WLDAELVLSE (167 aa). The DEAH box motif lies at 144–147; the sequence is DEVH. A Helicase C-terminal domain is found at 232–433; the sequence is AVNLVLDTIK…ALRTHILSTI (202 aa).

The protein belongs to the helicase family. Hel308 subfamily. Monomer.

It catalyses the reaction Couples ATP hydrolysis with the unwinding of duplex DNA by translocating in the 3'-5' direction.. It carries out the reaction ATP + H2O = ADP + phosphate + H(+). In terms of biological role, DNA-dependent ATPase and 3'-5' DNA helicase that may be involved in repair of stalled replication forks. This Methanosarcina mazei (strain ATCC BAA-159 / DSM 3647 / Goe1 / Go1 / JCM 11833 / OCM 88) (Methanosarcina frisia) protein is ATP-dependent DNA helicase Hel308.